The chain runs to 376 residues: ATP synthase gamma chain, chloroplastic (376 aa).

A chloroplast-targeting transit peptide spans M1 to C52. C133 is a catalytic residue. A disulfide bond links C250 and C256.

Belongs to the ATPase gamma chain family. In terms of assembly, F-type ATPases have 2 components, CF(1) - the catalytic core - and CF(0) - the membrane proton channel. CF(1) has five subunits: alpha(3), beta(3), gamma(1), delta(1), epsilon(1). CF(0) has four main subunits: a, b, b' and c.

The protein localises to the plastid. The protein resides in the chloroplast thylakoid membrane. Its function is as follows. Produces ATP from ADP in the presence of a proton gradient across the membrane. The gamma chain is believed to be important in regulating ATPase activity and the flow of protons through the CF(0) complex. This Pisum sativum (Garden pea) protein is ATP synthase gamma chain, chloroplastic (ATPC).